Reading from the N-terminus, the 762-residue chain is Chondroadherin-like protein (762 aa).

The signal sequence occupies residues 1–30 (MEGPRSSTHVPLVLPLLVLLLLAPARQAAA). The LRRNT 1 domain maps to 31 to 62 (QRCPQACICDNSRRHVACRYQNLTEVPDAIPE). An N-linked (GlcNAc...) asparagine glycan is attached at Asn-52. LRR repeat units follow at residues 87-108 (HLTHLDLRHCEVELVAEGAFRG), 111-132 (RLLLLNLASNHLRELPQEALDG), 135-156 (SLRRLELEGNALEELRPGTFGA), 159-180 (ALATLNLAHNALVYLPAMAFQG), 183-204 (RVRWLRLSHNALSVLAPEALAG), 207-228 (ALRRLSLHHNELQALPGPVLSQ), 231-252 (GLARLELGHNPLTYAGEEDGLA), 255-276 (GLRELLLDGGALQALGPRAFAH), and 279-300 (RLHTLDLRGNQLDTLPPLQGPG). The region spanning 310–359 (NPLWCGCQARPLLEWLARARVRSDGACQGPRRLRGEALDALRPWDLRCPG) is the LRRCT 1 domain. The interval 364–390 (EEEELEERAVAGPRAPPRGPPRGPGEE) is disordered. Positions 377-386 (RAPPRGPPRG) are enriched in pro residues. Residues 387–425 (PGEERAVAPCPRACVCVPESRHSSCEGCGLQAVPRGFPS) form the LRRNT 2 domain. A disulfide bridge links Cys-396 with Cys-411. LRR repeat units lie at residues 426–447 (DTQLLDLRRNHFPSVPRAAFPG), 450–471 (HLVSLHLQHCGIAELEAGALAG), 474–495 (RLIYLYLSDNQLAGLSAAALEG), 498–519 (RLGYLYLERNRFLQVPGAALRA), 522–543 (SLFSLHLQDNAVDRLAPGDLGR), 546–566 (ALRWVYLSGNRITEVSLGALG), 570–591 (ELEKLHLDRNQLREVPTGALEG), 594–615 (ALLELQLSGNPLRALRDGAFQP), 619–640 (SLQHLFLNSSGLEQICPGAFSG), and 644–665 (GLQSLHLQKNQLRALPALPSLS). Residue Asn-626 is glycosylated (N-linked (GlcNAc...) asparagine). Positions 675–724 (NPFHCDCQLLPLHRWLTGLNLRVGATCATPPNARGQRVKAAAAVFEDCPG) constitute an LRRCT 2 domain. Cystine bridges form between Cys-679–Cys-722 and Cys-681–Cys-701. Residues 728-745 (RKAKRTPASRPSARRTPI) are compositionally biased toward basic residues. A disordered region spans residues 728–762 (RKAKRTPASRPSARRTPIKGRQCGADKVGKEKGRL).

The protein belongs to the small leucine-rich proteoglycan (SLRP) family. SLRP class IV subfamily. In terms of assembly, associates with collagen and binds to collagen fibrils.

The protein resides in the secreted. It is found in the extracellular space. The protein localises to the extracellular matrix. In terms of biological role, potential negative modulator of chondrocyte differentiation. Inhibits collagen fibrillogenesis in vitro. May influence chondrocyte's differentiation by acting on its cellular collagenous microenvironment. The polypeptide is Chondroadherin-like protein (CHADL) (Homo sapiens (Human)).